The following is a 403-amino-acid chain: Formate-dependent phosphoribosylglycinamide formyltransferase (403 aa).

Residues glutamate 27 to leucine 28 and glutamate 87 contribute to the N(1)-(5-phospho-beta-D-ribosyl)glycinamide site. ATP is bound by residues arginine 120, lysine 161, serine 166 to glutamine 171, glutamate 201 to valine 204, and glutamate 209. In terms of domain architecture, ATP-grasp spans arginine 125–leucine 319. Residues glutamate 278 and glutamate 290 each contribute to the Mg(2+) site. N(1)-(5-phospho-beta-D-ribosyl)glycinamide is bound by residues aspartate 297, lysine 366, and arginine 373–arginine 374. The tract at residues glycine 382–alanine 403 is disordered. The span at glutamate 386–serine 397 shows a compositional bias: basic and acidic residues.

This sequence belongs to the PurK/PurT family. In terms of assembly, homodimer.

The catalysed reaction is N(1)-(5-phospho-beta-D-ribosyl)glycinamide + formate + ATP = N(2)-formyl-N(1)-(5-phospho-beta-D-ribosyl)glycinamide + ADP + phosphate + H(+). It participates in purine metabolism; IMP biosynthesis via de novo pathway; N(2)-formyl-N(1)-(5-phospho-D-ribosyl)glycinamide from N(1)-(5-phospho-D-ribosyl)glycinamide (formate route): step 1/1. Involved in the de novo purine biosynthesis. Catalyzes the transfer of formate to 5-phospho-ribosyl-glycinamide (GAR), producing 5-phospho-ribosyl-N-formylglycinamide (FGAR). Formate is provided by PurU via hydrolysis of 10-formyl-tetrahydrofolate. The polypeptide is Formate-dependent phosphoribosylglycinamide formyltransferase (Rhodococcus jostii (strain RHA1)).